A 455-amino-acid chain; its full sequence is Chromosomal replication initiator protein DnaA (455 aa).

Residues 1-75 (MDTNNNIEKE…EILSQNKVGM (75 aa)) form a domain I, interacts with DnaA modulators region. The segment at 75–106 (MHLAHSVDVRIEVAPKIQINAQANINYKAIKT) is domain II. The tract at residues 107-321 (SVKDSYTFEN…GAIIKISVNA (215 aa)) is domain III, AAA+ region. ATP-binding residues include Gly-151, Gly-153, Lys-154, and Thr-155. The domain IV, binds dsDNA stretch occupies residues 322-455 (NLMNAPIDLN…DKKTAFNSSE (134 aa)).

This sequence belongs to the DnaA family. Oligomerizes as a right-handed, spiral filament on DNA at oriC.

The protein resides in the cytoplasm. In terms of biological role, plays an essential role in the initiation and regulation of chromosomal replication. ATP-DnaA binds to the origin of replication (oriC) to initiate formation of the DNA replication initiation complex once per cell cycle. Binds the DnaA box (a 9 base pair repeat at the origin) and separates the double-stranded (ds)DNA. Forms a right-handed helical filament on oriC DNA; dsDNA binds to the exterior of the filament while single-stranded (ss)DNA is stabiized in the filament's interior. The ATP-DnaA-oriC complex binds and stabilizes one strand of the AT-rich DNA unwinding element (DUE), permitting loading of DNA polymerase. After initiation quickly degrades to an ADP-DnaA complex that is not apt for DNA replication. Binds acidic phospholipids. The protein is Chromosomal replication initiator protein DnaA of Helicobacter pylori (strain P12).